A 154-amino-acid chain; its full sequence is Myoglobin (154 aa).

The Globin domain occupies 2–148 (GLSDGEWQLV…FRNDMAAQYK (147 aa)). Ser4 is subject to Phosphoserine. Nitrite is bound at residue His65. O2 is bound at residue His65. At Thr68 the chain carries Phosphothreonine. Residue His94 coordinates heme b.

Belongs to the globin family. As to quaternary structure, monomeric.

Its subcellular location is the cytoplasm. The protein resides in the sarcoplasm. The catalysed reaction is Fe(III)-heme b-[protein] + nitric oxide + H2O = Fe(II)-heme b-[protein] + nitrite + 2 H(+). The enzyme catalyses H2O2 + AH2 = A + 2 H2O. Its function is as follows. Monomeric heme protein which primary function is to store oxygen and facilitate its diffusion within muscle tissues. Reversibly binds oxygen through a pentacoordinated heme iron and enables its timely and efficient release as needed during periods of heightened demand. Depending on the oxidative conditions of tissues and cells, and in addition to its ability to bind oxygen, it also has a nitrite reductase activity whereby it regulates the production of bioactive nitric oxide. Under stress conditions, like hypoxia and anoxia, it also protects cells against reactive oxygen species thanks to its pseudoperoxidase activity. In Cervus elaphus (Red deer), this protein is Myoglobin (MB).